Reading from the N-terminus, the 938-residue chain is Isoleucine--tRNA ligase (938 aa).

The 'HIGH' region signature appears at 58–68 (PYANGNIHLGH). L-isoleucyl-5'-AMP is bound at residue glutamate 562. A 'KMSKS' region motif is present at residues 603 to 607 (KMSKS). Lysine 606 contributes to the ATP binding site. Residues cysteine 901, cysteine 904, cysteine 921, and cysteine 924 each coordinate Zn(2+).

It belongs to the class-I aminoacyl-tRNA synthetase family. IleS type 1 subfamily. Monomer. It depends on Zn(2+) as a cofactor.

It localises to the cytoplasm. It catalyses the reaction tRNA(Ile) + L-isoleucine + ATP = L-isoleucyl-tRNA(Ile) + AMP + diphosphate. Catalyzes the attachment of isoleucine to tRNA(Ile). As IleRS can inadvertently accommodate and process structurally similar amino acids such as valine, to avoid such errors it has two additional distinct tRNA(Ile)-dependent editing activities. One activity is designated as 'pretransfer' editing and involves the hydrolysis of activated Val-AMP. The other activity is designated 'posttransfer' editing and involves deacylation of mischarged Val-tRNA(Ile). The chain is Isoleucine--tRNA ligase from Glaesserella parasuis serovar 5 (strain SH0165) (Haemophilus parasuis).